We begin with the raw amino-acid sequence, 201 residues long: Aminoglycoside N(6')-acetyltransferase type 1 (201 aa).

The N-acetyltransferase domain maps to 25 to 192; sequence VTLRLMTEHD…PAVYMVQTRQ (168 aa). Residues Trp51 and Asp154 each contribute to the substrate site. Residue Asn159 participates in acetyl-CoA binding.

As to quaternary structure, homodimer.

It catalyses the reaction kanamycin B + acetyl-CoA = N(6')-acetylkanamycin B + CoA + H(+). In terms of biological role, catalyzes the transfer of an acetyl group from acetyl-CoA to the 6'-amino group of aminoglycoside molecules conferring resistance to antibiotics containing the purpurosamine ring including amikacin and kanamycin. This Serratia marcescens protein is Aminoglycoside N(6')-acetyltransferase type 1 (aacA4).